Consider the following 438-residue polypeptide: Histidine--tRNA ligase (438 aa).

It belongs to the class-II aminoacyl-tRNA synthetase family. As to quaternary structure, homodimer.

It is found in the cytoplasm. The enzyme catalyses tRNA(His) + L-histidine + ATP = L-histidyl-tRNA(His) + AMP + diphosphate + H(+). The chain is Histidine--tRNA ligase from Blochmanniella pennsylvanica (strain BPEN).